Consider the following 447-residue polypeptide: N-succinylarginine dihydrolase (447 aa).

Residues 19-28 (AGLSFGNVAS), asparagine 110, and 137-138 (HR) each bind substrate. The active site involves glutamate 174. Substrate is bound at residue arginine 214. Histidine 250 is an active-site residue. 2 residues coordinate substrate: aspartate 252 and asparagine 364. The Nucleophile role is filled by cysteine 370.

The protein belongs to the succinylarginine dihydrolase family. In terms of assembly, homodimer.

It carries out the reaction N(2)-succinyl-L-arginine + 2 H2O + 2 H(+) = N(2)-succinyl-L-ornithine + 2 NH4(+) + CO2. Its pathway is amino-acid degradation; L-arginine degradation via AST pathway; L-glutamate and succinate from L-arginine: step 2/5. In terms of biological role, catalyzes the hydrolysis of N(2)-succinylarginine into N(2)-succinylornithine, ammonia and CO(2). The sequence is that of N-succinylarginine dihydrolase from Idiomarina loihiensis (strain ATCC BAA-735 / DSM 15497 / L2-TR).